A 62-amino-acid chain; its full sequence is Photosystem II reaction center protein Z (62 aa).

Helical transmembrane passes span L8–S28 and V41–V61.

This sequence belongs to the PsbZ family. As to quaternary structure, PSII is composed of 1 copy each of membrane proteins PsbA, PsbB, PsbC, PsbD, PsbE, PsbF, PsbH, PsbI, PsbJ, PsbK, PsbL, PsbM, PsbT, PsbX, PsbY, PsbZ, Psb30/Ycf12, at least 3 peripheral proteins of the oxygen-evolving complex and a large number of cofactors. It forms dimeric complexes.

Its subcellular location is the plastid. The protein resides in the chloroplast thylakoid membrane. Functionally, may control the interaction of photosystem II (PSII) cores with the light-harvesting antenna, regulates electron flow through the 2 photosystem reaction centers. PSII is a light-driven water plastoquinone oxidoreductase, using light energy to abstract electrons from H(2)O, generating a proton gradient subsequently used for ATP formation. The protein is Photosystem II reaction center protein Z of Cyanidioschyzon merolae (strain NIES-3377 / 10D) (Unicellular red alga).